The primary structure comprises 873 residues: F-BAR domain only protein 1 (873 aa).

In terms of domain architecture, F-BAR spans 1-248; the sequence is MSYFGEHFWG…NVENVTVDML (248 aa). The mediates membrane-binding stretch occupies residues 1-275; it reads MSYFGEHFWG…LDFDAYSSAA (275 aa). The disordered stretch occupies residues 153 to 172; it reads RENTSQKEMDKAETKSKKAA. Residues 155–178 are a coiled coil; the sequence is NTSQKEMDKAETKSKKAADSLRRS. The mediates interaction with the adaptor protein complex AP-2 stretch occupies residues 267-439; that stretch reads DFDAYSSAAL…KSLFGPPLES (173 aa). Ser-295, Ser-343, and Ser-368 each carry phosphoserine. The segment at 302 to 347 is disordered; the sequence is SVDFLESDSGVPPEVDDEGFTVRPDISQNNGAEPPRFSSSDSDFDD. Disordered regions lie at residues 381–600 and 813–833; these read GSLI…RGPS and SGHL…SPVA. Residues 447–466 are compositionally biased toward low complexity; that stretch reads TGSSSLGFTSSPSPFSSSSP. Ser-518 carries the phosphoserine modification. The span at 567 to 576 shows a compositional bias: low complexity; sequence SLSPSPLGSS. The segment at 593–873 is mediates interaction with AGFG1, CALM, DAB2, EPS15, EPS15R, ITSN1 and clathrin; sequence HGISRGPSPV…FATGMYLVSC (281 aa). Position 600 is a phosphoserine (Ser-600). In terms of domain architecture, MHD spans 609–872; the sequence is ALPVATAFTE…RFATGMYLVS (264 aa). A compositionally biased stretch (polar residues) spans 816 to 827; the sequence is LSASWQPQSGPS.

The protein belongs to the FCHO family. May oligomerize and form homotetramer. Interacts with AP2A2 and AP2B1; 2 subunits of the adaptor protein complex AP-2. Interacts with DAB2. Interacts with clathrin (CLTC or CLTCL1). Interacts with EPS15, EPS15R and ITSN1. Interacts with AGFG1 and CALM. May interact with ACVR1; linking this receptor to clathrin-mediated endocytosis. In terms of tissue distribution, mainly detected in brain and spleen.

Its subcellular location is the membrane. It is found in the clathrin-coated pit. Functionally, functions in an early step of clathrin-mediated endocytosis. Has both a membrane binding/bending activity and the ability to recruit proteins essential to the formation of functional clathrin-coated pits. May regulate Bmp signaling by regulating clathrin-mediated endocytosis of Bmp receptors. Involved in the regulation of T-cell poliferation and activation. Affects TCR clustering upon receptor triggering and modulates its internalisation, playing a role in TCR-dependent T-cell activation. In Mus musculus (Mouse), this protein is F-BAR domain only protein 1.